Consider the following 138-residue polypeptide: Putative pre-16S rRNA nuclease (138 aa).

It belongs to the YqgF nuclease family.

Its subcellular location is the cytoplasm. In terms of biological role, could be a nuclease involved in processing of the 5'-end of pre-16S rRNA. The polypeptide is Putative pre-16S rRNA nuclease (Shigella dysenteriae serotype 1 (strain Sd197)).